The following is a 453-amino-acid chain: Jacalin-related lectin 40 (453 aa).

Jacalin-type lectin domains lie at 1-142, 154-296, and 306-449; these read MAQK…YFTT, HIKL…YFSS, and PEKL…YVVP. Ala-2 carries the N-acetylalanine modification.

Belongs to the jacalin lectin family. Expressed in roots.

The sequence is that of Jacalin-related lectin 40 (JAL40) from Arabidopsis thaliana (Mouse-ear cress).